Here is a 570-residue protein sequence, read N- to C-terminus: Cytoplasmic polyadenylation element-binding protein 2 (570 aa).

Residues 434–516 form the RRM domain; that stretch reads LVAFIGGVPR…KRVEIKPYFF (83 aa).

In terms of tissue distribution, expressed specifically in the spermatogenic germ line.

Its function is as follows. Cytoplasmic polyadenylation element binding protein that binds to and regulates the translation of specific mRNAs. Not required for oogenesis. The protein is Cytoplasmic polyadenylation element-binding protein 2 (cpb-2) of Caenorhabditis elegans.